The primary structure comprises 105 residues: MKICKACSSCMVRTYVDGNIIFRCSCGESVQGDSQNLLVSSKVYHTGEMEDKYKIFIKNAPFDPTNCQIKKDCPNCHLDYLTQICIGSQKIIILVCRCGYTSNRG.

Zn(2+) contacts are provided by cysteine 4, cysteine 7, cysteine 24, cysteine 26, cysteine 73, cysteine 76, and cysteine 96. The segment at 4–26 (CKACSSCMVRTYVDGNIIFRCSC) adopts a C4-type; atypical zinc-finger fold.

The protein belongs to the Asfivirus DNA-directed RNA polymerase RPB9 homolog family. As to quaternary structure, part of the viral DNA-directed RNA polymerase that consists of 8 polII-like subunits (RPB1, RPB2, RPB3, RPB5, RPB6, RPB7, RPB9, RPB10), a capping enzyme and a termination factor.

It localises to the host cytoplasm. In terms of biological role, component of the DNA-directed RNA polymerase (RNAP) that catalyzes the transcription in the cytoplasm of viral DNA into RNA using the four ribonucleoside triphosphates as substrates. In African swine fever virus (isolate Pig/Kenya/KEN-50/1950) (ASFV), this protein is DNA-directed RNA polymerase RPB9 homolog.